Consider the following 305-residue polypeptide: Acetaldehyde dehydrogenase (305 aa).

Position 12-15 (12-15 (SGNI)) interacts with NAD(+). C127 acts as the Acyl-thioester intermediate in catalysis. Residues 158-166 (SAGPGTRAN) and N277 contribute to the NAD(+) site.

This sequence belongs to the acetaldehyde dehydrogenase family.

It catalyses the reaction acetaldehyde + NAD(+) + CoA = acetyl-CoA + NADH + H(+). The polypeptide is Acetaldehyde dehydrogenase (Mycolicibacterium paratuberculosis (strain ATCC BAA-968 / K-10) (Mycobacterium paratuberculosis)).